The sequence spans 510 residues: Tryptophan 6-hydroxylase fscE (510 aa).

Residues 11–31 (LLPIEGVIILVFVLSCFSLAI) traverse the membrane as a helical segment. C452 is a binding site for heme.

It belongs to the cytochrome P450 family. Heme is required as a cofactor.

The protein localises to the membrane. It participates in secondary metabolite biosynthesis. In terms of biological role, tryptophan 6-hydroxylase; part of the fragmented gene cluster that mediates the biosynthesis of fusarochromene, a tryptophan-derived metabolite closely related to a group of mycotoxins including fusarochromanone. Within the pathway, fscE hydroxalates the first intermediate D-tryptophan to yield 6-hydroxytryptophan. The first step of the pathway is the epimerization of L-tryptophan to D-tryptophan in the presence of the NRPS-like tryptophan epimerase fscC. D-tryptophan is subsequently hydroxylated by the tryptophan 6-hydroxylase fscE to yield 6-hydroxytryptophan. The pyrrole ring undergoes cleavaged by the tryptophan 2,3-dioxygenase fscD and is finally converted to 4-hydroxykyrunenine by the hydrolase fscH. The NRPS-like oxidoreductase fscA reduces the carboxyl group to primary alcohol and the DMATS-type prenyltransferase fscG performs prenylation, followed by the formation of a chromene ring catalyzed by the oxidoreductase fscI, which leads to desacetylfusarochromene. Epoxidation by fscF and rearrangement reactions of chromene double bonds convert compound desacetylfusarochromene to fusarochromanones. Although specific acetyltransferases were not found near the fsc gene cluster, several predicted enzymes containing the N-acetyltransferase superfamily domain are present in the genome of F.equiseti. These predicted enzymes may have the potential to convert desacetylfusarochromene to fusarochromene. The polypeptide is Tryptophan 6-hydroxylase fscE (Fusarium equiseti (Fusarium scirpi)).